Reading from the N-terminus, the 624-residue chain is Actin-related protein 8 (624 aa).

Met-1 bears the N-acetylmethionine mark. Residues 1–25 (MTQAEKGDAENGKEKGGEKEKEQRG) show a composition bias toward basic and acidic residues. Residues 1 to 29 (MTQAEKGDAENGKEKGGEKEKEQRGVKRP) are disordered. Residues Ser-55 and Thr-56 each contribute to the ATP site. Phosphoserine is present on Ser-132. An ATP-binding site is contributed by 283–286 (DVGD). Ser-412 bears the Phosphoserine mark. The disordered stretch occupies residues 430-460 (SKQEQSAKATADRKSASKPIGFEGDLRGQSS).

The protein belongs to the actin family. ARP8 subfamily. Component of the chromatin remodeling INO80 complex; specifically part of a complex module associated with the DBINO domain of INO80. Exists as monomers and dimers, but the dimer is most probably the biologically relevant form required for stable interactions with histones that exploits the twofold symmetry of the nucleosome core.

The protein localises to the nucleus. Its subcellular location is the chromosome. In terms of biological role, plays an important role in the functional organization of mitotic chromosomes. Exhibits low basal ATPase activity, and unable to polymerize. Its function is as follows. Proposed core component of the chromatin remodeling INO80 complex which is involved in transcriptional regulation, DNA replication and probably DNA repair. Required for the recruitment of INO80 (and probably the INO80 complex) to sites of DNA damage Strongly prefer nucleosomes and H3-H4 tetramers over H2A-H2B dimers, suggesting it may act as a nucleosome recognition module within the complex. This is Actin-related protein 8 (ACTR8) from Ailuropoda melanoleuca (Giant panda).